The primary structure comprises 204 residues: Elongation factor Ts (204 aa).

The segment at 80 to 83 (TDFV) is involved in Mg(2+) ion dislocation from EF-Tu.

This sequence belongs to the EF-Ts family.

Its subcellular location is the cytoplasm. Functionally, associates with the EF-Tu.GDP complex and induces the exchange of GDP to GTP. It remains bound to the aminoacyl-tRNA.EF-Tu.GTP complex up to the GTP hydrolysis stage on the ribosome. The sequence is that of Elongation factor Ts from Thermoanaerobacter sp. (strain X514).